The chain runs to 214 residues: Ras-like protein rasZ (214 aa).

16–23 (GDGGVGKT) serves as a coordination point for GTP. Residues 38 to 46 (YDPTIEDSY) carry the Effector region motif. Residues 63–67 (DTAGQ) and 122–125 (NKSD) each bind GTP. The residue at position 211 (Cys211) is a Cysteine methyl ester. Residue Cys211 is the site of S-geranylgeranyl cysteine attachment. Positions 212–214 (KMM) are cleaved as a propeptide — removed in mature form.

The protein belongs to the small GTPase superfamily. Ras family.

The protein localises to the cell membrane. It carries out the reaction GTP + H2O = GDP + phosphate + H(+). Ras proteins bind GDP/GTP and possess intrinsic GTPase activity. This Dictyostelium discoideum (Social amoeba) protein is Ras-like protein rasZ (rasZ).